A 305-amino-acid chain; its full sequence is P2Y purinoceptor 14 (305 aa).

Topologically, residues 1 to 29 (MDNTTTTEPPKQPCTRNTLITQQIIPMLY) are extracellular. N-linked (GlcNAc...) asparagine glycosylation occurs at N3. Residues 30-50 (CVVFITGVLLNGISGWIFFYV) traverse the membrane as a helical segment. At 51–55 (PSSKS) the chain is on the cytoplasmic side. The helical transmembrane segment at 56–76 (FIIYLKNIVVADFLMGLTFPF) threads the bilayer. Over 77–96 (KVLSDSGLGPWQLNVFVFRV) the chain is Extracellular. A helical transmembrane segment spans residues 97-117 (SAVIFYVNMYVSIAFFGLISF). The Cytoplasmic portion of the chain corresponds to 118-139 (DRYYKIVKPLLVSIVQSVNYSK). The helical transmembrane segment at 140 to 160 (VLSVLVWVLMLLLAVPNIILT) threads the bilayer. N-linked (GlcNAc...) asparagine glycosylation occurs at N161. Topologically, residues 161-188 (NQSVKDVTNIQCMELKNELGRKWHKASN) are extracellular. The helical transmembrane segment at 189-209 (YVFVSIFWIVFLLLTVFYMAI) threads the bilayer. Residues 210 to 234 (TRKIFKSHLKSRKNSISVKRKSSRN) are Cytoplasmic-facing. A helical transmembrane segment spans residues 235–255 (IFSIVLAFVACFAPYHVARIP). Residues 256–278 (YTKSQTEGHYSCQAKETLLYTKE) lie on the Extracellular side of the membrane. The chain crosses the membrane as a helical span at residues 279–299 (FTLLLSAANVCLDPISISSYA). The Cytoplasmic portion of the chain corresponds to 300-305 (SRLEKS).

This sequence belongs to the G-protein coupled receptor 1 family.

Its subcellular location is the cell membrane. In terms of biological role, receptor for UDP-glucose coupled to G-proteins. The sequence is that of P2Y purinoceptor 14 (P2ry14) from Rattus norvegicus (Rat).